Here is a 169-residue protein sequence, read N- to C-terminus: Peptide deformylase (169 aa).

2 residues coordinate Fe cation: Cys-91 and His-133. Glu-134 is an active-site residue. His-137 provides a ligand contact to Fe cation.

It belongs to the polypeptide deformylase family. Fe(2+) is required as a cofactor.

The catalysed reaction is N-terminal N-formyl-L-methionyl-[peptide] + H2O = N-terminal L-methionyl-[peptide] + formate. Removes the formyl group from the N-terminal Met of newly synthesized proteins. Requires at least a dipeptide for an efficient rate of reaction. N-terminal L-methionine is a prerequisite for activity but the enzyme has broad specificity at other positions. This chain is Peptide deformylase, found in Hydrogenovibrio crunogenus (strain DSM 25203 / XCL-2) (Thiomicrospira crunogena).